We begin with the raw amino-acid sequence, 398 residues long: tRNA(Ile)-lysidine synthase (398 aa).

25 to 30 (SGGVDS) is a binding site for ATP.

The protein belongs to the tRNA(Ile)-lysidine synthase family.

Its subcellular location is the cytoplasm. The enzyme catalyses cytidine(34) in tRNA(Ile2) + L-lysine + ATP = lysidine(34) in tRNA(Ile2) + AMP + diphosphate + H(+). Ligates lysine onto the cytidine present at position 34 of the AUA codon-specific tRNA(Ile) that contains the anticodon CAU, in an ATP-dependent manner. Cytidine is converted to lysidine, thus changing the amino acid specificity of the tRNA from methionine to isoleucine. The sequence is that of tRNA(Ile)-lysidine synthase from Francisella tularensis subsp. holarctica (strain OSU18).